The sequence spans 84 residues: MAHKKGGGSTKNGRDSNPKYLGVKAAGGSTVNAGTIILRQRGTAIKPGDNAGLGKDHTIFALVDGTVHFRNGRNNKKQVDIIPS.

Residues 1 to 21 (MAHKKGGGSTKNGRDSNPKYL) are disordered.

Belongs to the bacterial ribosomal protein bL27 family.

In Chlorobaculum parvum (strain DSM 263 / NCIMB 8327) (Chlorobium vibrioforme subsp. thiosulfatophilum), this protein is Large ribosomal subunit protein bL27.